Consider the following 173-residue polypeptide: uncharacterized protein (173 aa).

Positions 49–72 are disordered; it reads PTRSGRTSNSGNRGPVMTSTSSIN.

This is an uncharacterized protein from Human adenovirus B serotype 7 (HAdV-7).